A 245-amino-acid chain; its full sequence is Probable transcriptional regulatory protein TP_0474 (245 aa).

Belongs to the TACO1 family.

It localises to the cytoplasm. In Treponema pallidum (strain Nichols), this protein is Probable transcriptional regulatory protein TP_0474.